The chain runs to 189 residues: Pyridoxal 5'-phosphate synthase subunit PdxT (189 aa).

Gly-47–Ser-49 is a binding site for L-glutamine. Cys-79 (nucleophile) is an active-site residue. L-glutamine is bound by residues Arg-106 and Ile-135 to Arg-136. Residues His-171 and Glu-173 each act as charge relay system in the active site.

This sequence belongs to the glutaminase PdxT/SNO family. As to quaternary structure, in the presence of PdxS, forms a dodecamer of heterodimers. Only shows activity in the heterodimer.

The enzyme catalyses aldehydo-D-ribose 5-phosphate + D-glyceraldehyde 3-phosphate + L-glutamine = pyridoxal 5'-phosphate + L-glutamate + phosphate + 3 H2O + H(+). It catalyses the reaction L-glutamine + H2O = L-glutamate + NH4(+). Its pathway is cofactor biosynthesis; pyridoxal 5'-phosphate biosynthesis. Functionally, catalyzes the hydrolysis of glutamine to glutamate and ammonia as part of the biosynthesis of pyridoxal 5'-phosphate. The resulting ammonia molecule is channeled to the active site of PdxS. The polypeptide is Pyridoxal 5'-phosphate synthase subunit PdxT (Caldanaerobacter subterraneus subsp. tengcongensis (strain DSM 15242 / JCM 11007 / NBRC 100824 / MB4) (Thermoanaerobacter tengcongensis)).